The sequence spans 260 residues: MPNLLEKTRKITSILQRSVDSLETELPYNTMASRLADIIDCNACIINGGGTLLGYAMKYKTNTDRVEEFFEAKQFPDTYVKAASRVYDTEANLSVENELTIFPVESKDTYPGGLTTIAPIYGGGMRLGSLIIWRNDNEFSDDDLILVEISSTVVGIQLLNLQTENLEDTIRKQTAVNMAINTLSYSEMKAVAAILGELDGNEGRLTASVIADRIGITRSVIVNALRKLESAGIIESRSLGMKGTYLKVINEGIFAKLKEF.

The interval 1-159 (MPNLLEKTRK…SSTVVGIQLL (159 aa)) is GAF domain. The segment at residues 207–226 (ASVIADRIGITRSVIVNALR) is a DNA-binding region (H-T-H motif).

Belongs to the CodY family.

The protein resides in the cytoplasm. DNA-binding global transcriptional regulator which is involved in the adaptive response to starvation and acts by directly or indirectly controlling the expression of numerous genes in response to nutrient availability. During rapid exponential growth, CodY is highly active and represses genes whose products allow adaptation to nutrient depletion. This Streptococcus pyogenes serotype M1 protein is Global transcriptional regulator CodY.